A 336-amino-acid chain; its full sequence is Anthranilate phosphoribosyltransferase (336 aa).

5-phospho-alpha-D-ribose 1-diphosphate is bound by residues Gly82, 85–86 (GD), Thr90, 92–95 (NIST), 110–118 (KHGNRFASG), and Ser122. Gly82 serves as a coordination point for anthranilate. Ser94 contributes to the Mg(2+) binding site. Asn113 contributes to the anthranilate binding site. Arg168 serves as a coordination point for anthranilate. The Mg(2+) site is built by Asp227 and Glu228.

Belongs to the anthranilate phosphoribosyltransferase family. In terms of assembly, homodimer. The cofactor is Mg(2+).

The catalysed reaction is N-(5-phospho-beta-D-ribosyl)anthranilate + diphosphate = 5-phospho-alpha-D-ribose 1-diphosphate + anthranilate. It functions in the pathway amino-acid biosynthesis; L-tryptophan biosynthesis; L-tryptophan from chorismate: step 2/5. In terms of biological role, catalyzes the transfer of the phosphoribosyl group of 5-phosphorylribose-1-pyrophosphate (PRPP) to anthranilate to yield N-(5'-phosphoribosyl)-anthranilate (PRA). The sequence is that of Anthranilate phosphoribosyltransferase from Desulfitobacterium hafniense (strain Y51).